Here is a 58-residue protein sequence, read N- to C-terminus: Small ribosomal subunit protein bS21 (58 aa).

The disordered stretch occupies residues 27 to 58 (GTLQELRKREHYEKPSVKRKRKSEAARKRKKY). Basic and acidic residues predominate over residues 31 to 42 (ELRKREHYEKPS). Basic residues predominate over residues 43-58 (VKRKRKSEAARKRKKY).

It belongs to the bacterial ribosomal protein bS21 family.

The sequence is that of Small ribosomal subunit protein bS21 (rpsU) from Lactococcus lactis subsp. lactis (strain IL1403) (Streptococcus lactis).